We begin with the raw amino-acid sequence, 68 residues long: Large ribosomal subunit protein uL29 (68 aa).

It belongs to the universal ribosomal protein uL29 family.

This chain is Large ribosomal subunit protein uL29, found in Limosilactobacillus reuteri (strain DSM 20016) (Lactobacillus reuteri).